Consider the following 166-residue polypeptide: Cyclic pyranopterin monophosphate synthase (166 aa).

Substrate-binding positions include 83 to 85 and 121 to 122; these read LCH and ME. Asp136 is a catalytic residue.

It belongs to the MoaC family. As to quaternary structure, homohexamer; trimer of dimers.

It carries out the reaction (8S)-3',8-cyclo-7,8-dihydroguanosine 5'-triphosphate = cyclic pyranopterin phosphate + diphosphate. Its pathway is cofactor biosynthesis; molybdopterin biosynthesis. Catalyzes the conversion of (8S)-3',8-cyclo-7,8-dihydroguanosine 5'-triphosphate to cyclic pyranopterin monophosphate (cPMP). This chain is Cyclic pyranopterin monophosphate synthase, found in Rhodospirillum rubrum (strain ATCC 11170 / ATH 1.1.1 / DSM 467 / LMG 4362 / NCIMB 8255 / S1).